An 84-amino-acid polypeptide reads, in one-letter code: Putative membrane protein insertion efficiency factor (84 aa).

Residues 61 to 84 form a disordered region; that stretch reads SQGFEDPLPPNTKRTNLTHGRQTK. Residues 72–84 show a composition bias toward polar residues; the sequence is TKRTNLTHGRQTK.

This sequence belongs to the UPF0161 family.

Its subcellular location is the cell inner membrane. Its function is as follows. Could be involved in insertion of integral membrane proteins into the membrane. The protein is Putative membrane protein insertion efficiency factor of Leptospira borgpetersenii serovar Hardjo-bovis (strain JB197).